Reading from the N-terminus, the 312-residue chain is MTRTRSDSLAAGGLNWDSMPLKLFAGGNAKFWDPADIDFSKDRADWESLSNLERDWATRLCAQFIAGEEAVTQDIQPFMAAMRAEGRLGDEMYLTQFAFEEAKHTQVFRMWLDAVGMTDDLQCYLDDLPSYRQMFYEELPASLEALATDPSPAAQVRASATYNHVIEGMMALTGYYAWHRICVDRKVLPGMQELVRRIGDDERRHMAWGTFTCRRHVAADDANWEVFENRMNELIPLALSNTDDSFALYDEIPFGFAKEEFQQYAADKGMRRFGTISSARGRALAEIDVDYSPLQLEDTFAAEDSRVLATSA.

The Mn(2+) site is built by glutamate 68, glutamate 101, and histidine 104. A cross-link (3-(O4'-tyrosyl)-valine (Val-Tyr)) is located at residues 71–162 (VTQDIQPFMA…AAQVRASATY (92 aa)). Glutamate 101 contributes to the Fe cation binding site. Residues glutamate 167, glutamate 202, and histidine 205 each coordinate Fe cation.

It belongs to the ribonucleoside diphosphate reductase small chain family. R2-like ligand binding oxidase subfamily. In terms of assembly, homodimer. Fe cation serves as cofactor. It depends on Mn(2+) as a cofactor.

Its function is as follows. Probable oxidase that might be involved in lipid metabolism. This chain is R2-like ligand binding oxidase, found in Mycobacterium sp. (strain JLS).